A 111-amino-acid polypeptide reads, in one-letter code: uncharacterized protein (111 aa).

Residues 1 to 18 (MGKSMEEGIFVKVFPSKA) form the signal peptide.

This is an uncharacterized protein from Acidianus convivator (ATV).